The primary structure comprises 459 residues: Argininosuccinate lyase (459 aa).

Belongs to the lyase 1 family. Argininosuccinate lyase subfamily.

The protein resides in the cytoplasm. It carries out the reaction 2-(N(omega)-L-arginino)succinate = fumarate + L-arginine. The protein operates within amino-acid biosynthesis; L-arginine biosynthesis; L-arginine from L-ornithine and carbamoyl phosphate: step 3/3. In Staphylococcus aureus (strain bovine RF122 / ET3-1), this protein is Argininosuccinate lyase.